The following is a 1118-amino-acid chain: Protein SUPPRESSOR OF NPR1-1 CONSTITUTIVE 4 (1118 aa).

Positions 1 to 35 are cleaved as a signal peptide; that stretch reads MNSQQSTRTKQMLQQSSTHLLCGVVLLQLFAAQVD. Topologically, residues 36 to 751 are extracellular; it reads AQRSTSPWQT…PLRNFLKVIR (716 aa). Residues 51–353 enclose the GP-PDE 1 domain; sequence PLVIARGGFS…DFPLTASASV (303 aa). 13 N-linked (GlcNAc...) asparagine glycosylation sites follow: N106, N195, N251, N260, N318, N335, N362, N422, N433, N497, N557, N573, and N656. Positions 369-670 constitute a GP-PDE 2 domain; that stretch reads FLVISKNGAS…EFPYTAARYK (302 aa). The chain crosses the membrane as a helical span at residues 752–772; the sequence is IVSWSVAGVVLFLVLLTLVFC. The Cytoplasmic segment spans residues 773-1118; it reads FHRKRETRLR…SEDVSVYTEG (346 aa). Residues 805 to 1094 form the Protein kinase domain; the sequence is KSFAEVVGRG…ALEVPPRPVL (290 aa). Residues 811 to 819 and K833 each bind ATP; that span reads VGRGGFGIV. Residue D928 is the Proton acceptor of the active site.

The protein in the N-terminal section; belongs to the glycerophosphoryl diester phosphodiesterase family. In the C-terminal section; belongs to the protein kinase superfamily. Ser/Thr protein kinase family. Expressed in shoots, rosette and cauline leaves, stems, flowers and siliques.

It localises to the cell membrane. It carries out the reaction a sn-glycero-3-phosphodiester + H2O = an alcohol + sn-glycerol 3-phosphate + H(+). It catalyses the reaction L-seryl-[protein] + ATP = O-phospho-L-seryl-[protein] + ADP + H(+). The catalysed reaction is L-threonyl-[protein] + ATP = O-phospho-L-threonyl-[protein] + ADP + H(+). Functionally, atypical receptor-like kinase involved in disease resistance. The polypeptide is Protein SUPPRESSOR OF NPR1-1 CONSTITUTIVE 4 (Arabidopsis thaliana (Mouse-ear cress)).